The sequence spans 366 residues: MAP kinase-activated protein kinase 2 (366 aa).

The Protein kinase domain maps to Lys30–Ile291. ATP-binding positions include Leu36–Val44 and Lys59. Staurosporine is bound at residue Glu105–Leu107. The active-site Proton acceptor is Asp152. At Thr188 the chain carries Phosphothreonine; by MAPK14. Ser238 carries the phosphoserine; by MAPK14 modification. Residue Ser294 is modified to Phosphoserine; by autocatalysis. Residues Ser294–Arg330 form an autoinhibitory helix region. The residue at position 300 (Thr300) is a Phosphothreonine; by MAPK14. Residue Lys319 forms a Glycyl lysine isopeptide (Lys-Gly) (interchain with G-Cter in SUMO) linkage. Positions Met322–Val331 match the Nuclear export signal (NES) motif. Positions Asp332 to Ala356 are p38 MAPK-binding site. Short sequence motifs (bipartite nuclear localization signal) lie at residues Lys337–Lys340 and Lys351–Lys355.

Belongs to the protein kinase superfamily. CAMK Ser/Thr protein kinase family. As to quaternary structure, heterodimer with p38-alpha/MAPK14; this heterodimer forms a stable complex: molecules are positioned 'face to face' so that the ATP-binding sites of both kinases are at the heterodimer interface. Interacts with PHC2. Interacts with HSF1. Sumoylation inhibits the protein kinase activity. Post-translationally, phosphorylated and activated by MAP kinase p38-alpha/MAPK14 at Thr-188, Ser-238 and Thr-300.

It localises to the cytoplasm. It is found in the nucleus. The catalysed reaction is L-seryl-[protein] + ATP = O-phospho-L-seryl-[protein] + ADP + H(+). It catalyses the reaction L-threonyl-[protein] + ATP = O-phospho-L-threonyl-[protein] + ADP + H(+). With respect to regulation, activated following phosphorylation by p38-alpha/MAPK14 following various stresses. Inhibited following sumoylation. Specifically inhibited by pyrrolopyridine inhibitors. Functionally, stress-activated serine/threonine-protein kinase involved in cytokine production, endocytosis, reorganization of the cytoskeleton, cell migration, cell cycle control, chromatin remodeling, DNA damage response and transcriptional regulation. Following stress, it is phosphorylated and activated by MAP kinase p38-alpha/MAPK14, leading to phosphorylation of substrates. Phosphorylates serine in the peptide sequence, Hyd-X-R-X(2)-S, where Hyd is a large hydrophobic residue. Phosphorylates ALOX5, CDC25B, CDC25C, CEP131, ELAVL1, HNRNPA0, HSP27/HSPB1, KRT18, KRT20, LIMK1, LSP1, PABPC1, PARN, PDE4A, RCSD1, RPS6KA3, TAB3 and TTP/ZFP36. Phosphorylates HSF1; leading to the interaction with HSP90 proteins and inhibiting HSF1 homotrimerization, DNA-binding and transactivation activities. Mediates phosphorylation of HSP27/HSPB1 in response to stress, leading to dissociation of HSP27/HSPB1 from large small heat-shock protein (sHsps) oligomers and impairment of their chaperone activities and ability to protect against oxidative stress effectively. Involved in inflammatory response by regulating tumor necrosis factor (TNF) and IL6 production post-transcriptionally: acts by phosphorylating AU-rich elements (AREs)-binding proteins ELAVL1, HNRNPA0, PABPC1 and TTP/ZFP36, leading to regulate the stability and translation of TNF and IL6 mRNAs. Phosphorylation of TTP/ZFP36, a major post-transcriptional regulator of TNF, promotes its binding to 14-3-3 proteins and reduces its ARE mRNA affinity leading to inhibition of dependent degradation of ARE-containing transcripts. Phosphorylates CEP131 in response to cellular stress following ultraviolet irradiation which promotes binding of CEP131 to 14-3-3 proteins and inhibits formation of novel centriolar satellites. Also involved in late G2/M checkpoint following DNA damage through a process of post-transcriptional mRNA stabilization: following DNA damage, relocalizes from nucleus to cytoplasm and phosphorylates HNRNPA0 and PARN, leading to stabilization of GADD45A mRNA. Involved in toll-like receptor signaling pathway (TLR) in dendritic cells: required for acute TLR-induced macropinocytosis by phosphorylating and activating RPS6KA3. This chain is MAP kinase-activated protein kinase 2 (MAPKAPK2), found in Oryctolagus cuniculus (Rabbit).